Reading from the N-terminus, the 446-residue chain is Methylenetetrahydrofolate--tRNA-(uracil-5-)-methyltransferase TrmFO (446 aa).

Residue 9-14 (GGGMAG) participates in FAD binding.

Belongs to the MnmG family. TrmFO subfamily. The cofactor is FAD.

The protein resides in the cytoplasm. The enzyme catalyses uridine(54) in tRNA + (6R)-5,10-methylene-5,6,7,8-tetrahydrofolate + NADH + H(+) = 5-methyluridine(54) in tRNA + (6S)-5,6,7,8-tetrahydrofolate + NAD(+). The catalysed reaction is uridine(54) in tRNA + (6R)-5,10-methylene-5,6,7,8-tetrahydrofolate + NADPH + H(+) = 5-methyluridine(54) in tRNA + (6S)-5,6,7,8-tetrahydrofolate + NADP(+). Its function is as follows. Catalyzes the folate-dependent formation of 5-methyl-uridine at position 54 (M-5-U54) in all tRNAs. This is Methylenetetrahydrofolate--tRNA-(uracil-5-)-methyltransferase TrmFO from Ruegeria sp. (strain TM1040) (Silicibacter sp.).